Reading from the N-terminus, the 149-residue chain is Arginine repressor (149 aa).

It belongs to the ArgR family.

It is found in the cytoplasm. Its pathway is amino-acid biosynthesis; L-arginine biosynthesis [regulation]. Its function is as follows. Regulates arginine biosynthesis genes. The protein is Arginine repressor of Halalkalibacterium halodurans (strain ATCC BAA-125 / DSM 18197 / FERM 7344 / JCM 9153 / C-125) (Bacillus halodurans).